A 570-amino-acid chain; its full sequence is Protein NRT1/ PTR FAMILY 8.1 (570 aa).

A Phosphothreonine modification is found at threonine 98. Helical transmembrane passes span 99-119 (IATF…SASV), 140-160 (AVFF…KPCV), 182-202 (FFNW…TVLV), 210-230 (WGWG…FFFF), 329-349 (IITL…YSQM), 377-397 (LFDT…IIPL), 414-434 (MGIG…LEVV), 454-474 (IFWQ…TFIG), 494-514 (LSLT…TVVM), and 537-557 (YFFY…LWIS).

It belongs to the major facilitator superfamily. Proton-dependent oligopeptide transporter (POT/PTR) (TC 2.A.17) family. Expressed in cotyledons, hypocotyls, leaves, roots, flowers, pistils and vascular tissue of sepals, anthers, carpels and funiculi. Not detected in seeds.

The protein resides in the cell membrane. Peptide transporter. Mediates the transport of di- and tripeptides. High affinity transporter with low selectivity. No transport of amino acids. The protein is Protein NRT1/ PTR FAMILY 8.1 (NPF8.1) of Arabidopsis thaliana (Mouse-ear cress).